The following is an 89-amino-acid chain: Small ribosomal subunit protein uS15 (89 aa).

It belongs to the universal ribosomal protein uS15 family. Part of the 30S ribosomal subunit. Forms a bridge to the 50S subunit in the 70S ribosome, contacting the 23S rRNA.

Functionally, one of the primary rRNA binding proteins, it binds directly to 16S rRNA where it helps nucleate assembly of the platform of the 30S subunit by binding and bridging several RNA helices of the 16S rRNA. Forms an intersubunit bridge (bridge B4) with the 23S rRNA of the 50S subunit in the ribosome. This chain is Small ribosomal subunit protein uS15, found in Hahella chejuensis (strain KCTC 2396).